Here is a 711-residue protein sequence, read N- to C-terminus: Glycine--tRNA ligase beta subunit (711 aa).

It belongs to the class-II aminoacyl-tRNA synthetase family. Tetramer of two alpha and two beta subunits.

The protein localises to the cytoplasm. It carries out the reaction tRNA(Gly) + glycine + ATP = glycyl-tRNA(Gly) + AMP + diphosphate. The chain is Glycine--tRNA ligase beta subunit from Polaromonas naphthalenivorans (strain CJ2).